The chain runs to 205 residues: Octanoyltransferase (205 aa).

Positions 30-205 (NSADELVWLL…ILKKEFYKIF (176 aa)) constitute a BPL/LPL catalytic domain. Substrate is bound by residues 68-75 (RGGKHTYH), 140-142 (AFG), and 153-155 (GIA). Cysteine 171 acts as the Acyl-thioester intermediate in catalysis.

This sequence belongs to the LipB family.

The protein resides in the cytoplasm. It catalyses the reaction octanoyl-[ACP] + L-lysyl-[protein] = N(6)-octanoyl-L-lysyl-[protein] + holo-[ACP] + H(+). It functions in the pathway protein modification; protein lipoylation via endogenous pathway; protein N(6)-(lipoyl)lysine from octanoyl-[acyl-carrier-protein]: step 1/2. In terms of biological role, catalyzes the transfer of endogenously produced octanoic acid from octanoyl-acyl-carrier-protein onto the lipoyl domains of lipoate-dependent enzymes. Lipoyl-ACP can also act as a substrate although octanoyl-ACP is likely to be the physiological substrate. The protein is Octanoyltransferase of Wolbachia pipientis wMel.